Here is a 492-residue protein sequence, read N- to C-terminus: Catalase-2 (492 aa).

Active-site residues include His65 and Asn138. Position 348 (Tyr348) interacts with heme.

It belongs to the catalase family. Homotetramer and heterotetramer. At least six or seven isozymes are produced from a mixture of 3 gene products. Interacts with NCA1. Interacts with LSD1. Requires heme as cofactor.

Its subcellular location is the cytoplasm. It is found in the cytosol. It localises to the peroxisome matrix. The enzyme catalyses 2 H2O2 = O2 + 2 H2O. Catalyzes the degradation of hydrogen peroxide (H(2)O(2)) generated by peroxisomal oxidases to water and oxygen, thereby protecting cells from the toxic effects of hydrogen peroxide. This chain is Catalase-2 (CAT2), found in Arabidopsis thaliana (Mouse-ear cress).